We begin with the raw amino-acid sequence, 193 residues long: Molybdopterin synthase catalytic subunit (193 aa).

Residues 118–119 (HR), lysine 134, and 141–143 (KKE) each bind substrate. A disordered region spans residues 159-193 (DRTTTDGTTASSPAPATRPAKGGGCCGRKVRVNES). Positions 163 to 178 (TDGTTASSPAPATRPA) are enriched in low complexity.

This sequence belongs to the MoaE family. MOCS2B subfamily. Heterotetramer; composed of 2 small (MOCS2A) and 2 large (MOCS2B) subunits.

The protein resides in the cytoplasm. It catalyses the reaction 2 [molybdopterin-synthase sulfur-carrier protein]-C-terminal-Gly-aminoethanethioate + cyclic pyranopterin phosphate + H2O = molybdopterin + 2 [molybdopterin-synthase sulfur-carrier protein]-C-terminal Gly-Gly + 2 H(+). It participates in cofactor biosynthesis; molybdopterin biosynthesis. In terms of biological role, catalytic subunit of the molybdopterin synthase complex, a complex that catalyzes the conversion of precursor Z into molybdopterin. Acts by mediating the incorporation of 2 sulfur atoms from thiocarboxylated MOCS2A into precursor Z to generate a dithiolene group. In Oryza sativa subsp. japonica (Rice), this protein is Molybdopterin synthase catalytic subunit.